Reading from the N-terminus, the 856-residue chain is MTLSAQQLQQHTPMMQQFLTIKSEVPDTLLFYRMGDFYELFFDDARKASQLLGISLTQRGKTGGNAIPMAGVPYHSVEGYLAKLIAMGESIAICEQIGDPATSKGPVERKLVRIITPGTVTDEALLNDRQDNLLCSVYQLQNSFGIASLDLGSGRFIINQFQHTETLQAELQRLNPAELLYPENFEHMDLIEHLQTIRRRPEWEFELATSKKILNQQFSTKDLIGFGVEKAEVALCAAGALLQYIKDTQRTSLPHLQSIQLEKNIDSVILDAATRKNLELTQNLSGGFDNTLAEVLDFTVTPMGSRLLKRWIHQPIRNFNTLTYRQTMIQTLIEQDLSSALADPLKQIGDVERVIARLALRSARPRDLTRLRTAFSLLPELQHLIADLPTELVGKLNKEMGLYPELLTLLEKAVIDNPPVIIRDGGVIKEGYNEELDQWRNLAKGATDYLEQLETRERQATGISTLKVGYNRVHGYYIETSRSQSDIVPAHYIRRQTLKNTERYIIAELKEHEDKVLSSRGKALALEKKLYEQLIDLLLPHLQNLQSTAQALAELDVLNNLAERAVTLNYVRPTLQAENGIEIEEGRHPVVEQVSKTPFIANPVMLNDKRRMLIITGPNMGGKSTYMRQVALMVLMAHIGSFIPAQQAKIGPVDRIFTRIGASDDLASGRSTFMVEMTETANILHNATKNSLVLMDEIGRGTSTFDGLSLAWACAEQLAKKIQAYTLFATHYFELTKLPENIPELVNVHLDAVEHGDAIAFLHAVQEGAANKSYGLQVAALAGVPKEVVSNAKNILRQLELGSQPQANLNEKPLQTTLAFDDAQTNQALLLLANINPDELTPKKALELIYLLKERA.

Position 617–624 (617–624 (GPNMGGKS)) interacts with ATP.

This sequence belongs to the DNA mismatch repair MutS family.

In terms of biological role, this protein is involved in the repair of mismatches in DNA. It is possible that it carries out the mismatch recognition step. This protein has a weak ATPase activity. The polypeptide is DNA mismatch repair protein MutS (Psychromonas ingrahamii (strain DSM 17664 / CCUG 51855 / 37)).